Reading from the N-terminus, the 653-residue chain is Asparagine--tRNA ligase, cytoplasmic (653 aa).

Belongs to the class-II aminoacyl-tRNA synthetase family.

The protein resides in the cytoplasm. The enzyme catalyses tRNA(Asn) + L-asparagine + ATP = L-asparaginyl-tRNA(Asn) + AMP + diphosphate + H(+). In Dictyostelium discoideum (Social amoeba), this protein is Asparagine--tRNA ligase, cytoplasmic (asnS1).